The sequence spans 273 residues: Shikimate dehydrogenase (NADP(+)) (273 aa).

Residues 18–20 (SKS) and threonine 65 each bind shikimate. Lysine 69 functions as the Proton acceptor in the catalytic mechanism. Glutamate 81 contacts NADP(+). Residues asparagine 90 and aspartate 105 each coordinate shikimate. NADP(+) contacts are provided by residues 130 to 134 (GAGGA), 154 to 159 (NRTHSK), and methionine 217. Residue tyrosine 219 participates in shikimate binding. Glycine 240 lines the NADP(+) pocket.

It belongs to the shikimate dehydrogenase family. In terms of assembly, homodimer.

The catalysed reaction is shikimate + NADP(+) = 3-dehydroshikimate + NADPH + H(+). It participates in metabolic intermediate biosynthesis; chorismate biosynthesis; chorismate from D-erythrose 4-phosphate and phosphoenolpyruvate: step 4/7. Functionally, involved in the biosynthesis of the chorismate, which leads to the biosynthesis of aromatic amino acids. Catalyzes the reversible NADPH linked reduction of 3-dehydroshikimate (DHSA) to yield shikimate (SA). The sequence is that of Shikimate dehydrogenase (NADP(+)) from Janthinobacterium sp. (strain Marseille) (Minibacterium massiliensis).